The sequence spans 189 residues: Photosystem I assembly protein Ycf4 (189 aa).

The next 2 membrane-spanning stretches (helical) occupy residues 25 to 45 (SVYFWAVALTGGGLGFTLAGL) and 62 to 82 (LVFIPQGIAMLFYGVLGSLAG).

The protein belongs to the Ycf4 family.

The protein localises to the cellular thylakoid membrane. Its function is as follows. Seems to be required for the assembly of the photosystem I complex. The polypeptide is Photosystem I assembly protein Ycf4 (Synechococcus sp. (strain JA-3-3Ab) (Cyanobacteria bacterium Yellowstone A-Prime)).